We begin with the raw amino-acid sequence, 224 residues long: Urease accessory protein UreF (224 aa).

It belongs to the UreF family. In terms of assembly, ureD, UreF and UreG form a complex that acts as a GTP-hydrolysis-dependent molecular chaperone, activating the urease apoprotein by helping to assemble the nickel containing metallocenter of UreC. The UreE protein probably delivers the nickel.

It localises to the cytoplasm. In terms of biological role, required for maturation of urease via the functional incorporation of the urease nickel metallocenter. This is Urease accessory protein UreF from Pseudomonas fluorescens (strain Pf0-1).